The following is a 277-amino-acid chain: RAD52 motif-containing protein 1 (277 aa).

The 81-residue stretch at 15–95 (QTLLVWGLEP…SPLKVCVCTK (81 aa)) folds into the RRM domain.

As to quaternary structure, homodimer.

Its subcellular location is the nucleus. The protein localises to the cytoplasm. The protein resides in the nucleolus. Confers resistance to the antitumor agent cisplatin. Binds preferentially to sites of DNA modified by cisplatin in vitro. Binds to double-stranded DNA in a cooperative manner resulting in the formation of filament-like structures. Binds to single-stranded DNA with no cooperativity. Binds to RNA. The protein is RAD52 motif-containing protein 1 (RDM1) of Gallus gallus (Chicken).